Reading from the N-terminus, the 490-residue chain is Cytochrome P450 2C38 (490 aa).

The N-terminal stretch at 1–20 (MDLVTFLVLTLSSLILLSLW) is a signal peptide. Residue Cys-435 coordinates heme.

The protein belongs to the cytochrome P450 family. It depends on heme as a cofactor. As to expression, liver, brain, kidney, and intestine, with trace amounts in lung and heart.

The protein localises to the endoplasmic reticulum membrane. The protein resides in the microsome membrane. The catalysed reaction is an organic molecule + reduced [NADPH--hemoprotein reductase] + O2 = an alcohol + oxidized [NADPH--hemoprotein reductase] + H2O + H(+). It catalyses the reaction (5Z,8Z,11Z,14Z)-eicosatetraenoate + reduced [NADPH--hemoprotein reductase] + O2 = 11,12-epoxy-(5Z,8Z,14Z)-eicosatrienoate + oxidized [NADPH--hemoprotein reductase] + H2O + H(+). The protein operates within lipid metabolism; arachidonate metabolism. Functionally, a cytochrome P450 monooxygenase that primarily catalyzes the epoxidation of 11,12 double bond of (5Z,8Z,11Z,14Z)-eicosatetraenoic acid (arachidonate) forming 11,12-epoxyeicosatrienoic acid (11,12-EET) regioisomer. Mechanistically, uses molecular oxygen inserting one oxygen atom into a substrate, and reducing the second into a water molecule, with two electrons provided by NADPH via cytochrome P450 reductase (CPR; NADPH--hemoprotein reductase). This Mus musculus (Mouse) protein is Cytochrome P450 2C38.